The following is a 290-amino-acid chain: Nucleoid occlusion protein (290 aa).

Residues 153–172 (EALAQRLGKGQSTIANKLRL) constitute a DNA-binding region (H-T-H motif).

It belongs to the ParB family.

Its subcellular location is the cytoplasm. The protein resides in the nucleoid. In terms of biological role, effects nucleoid occlusion by binding relatively nonspecifically to DNA and preventing the assembly of the division machinery in the vicinity of the nucleoid, especially under conditions that disturb the cell cycle. It helps to coordinate cell division and chromosome segregation by preventing the formation of the Z ring through the nucleoid, which would cause chromosome breakage. The protein is Nucleoid occlusion protein of Bacillus cereus (strain G9842).